A 596-amino-acid chain; its full sequence is Leucine-rich repeat and IQ domain-containing protein 4 (596 aa).

22 LRR repeats span residues 22 to 44 (LPRL…LLRQ), 59 to 83 (LTDR…ILAL), 84 to 106 (KELE…IQQL), 108 to 129 (NTKV…LGAL), 130 to 152 (SSLE…VVSR), 153 to 176 (LRTL…ICKS), 177 to 200 (LHHL…IVNQ), 202 to 223 (KLRE…LCVL), 224 to 246 (YNLE…IGHL), 248 to 269 (RLQK…LSQC), 270 to 293 (SKLS…ELLT), 295 to 315 (LTEV…LCSW), 317 to 337 (SLHL…SFKR), 338 to 361 (LINL…ICAL), 362 to 384 (KNLE…ISLL), 385 to 407 (SNLK…IFSL), 410 to 433 (LEKL…IKRL), 434 to 457 (MNLK…GLMP), 459 to 479 (LEVL…ICRT), 480 to 502 (RNLR…LDHL), 504 to 525 (NLKV…VCNQ), and 527 to 549 (NEAI…TIQA). The region spanning 540 to 569 (RKMMATTIQAWWRGIMVRKGYGSYEELLKA) is the IQ domain. A compositionally biased stretch (basic residues) spans 569-587 (ARKKGKSPPKDKKGKKAAK). The tract at residues 569 to 596 (ARKKGKSPPKDKKGKKAAKGKPEKGNKK) is disordered.

This chain is Leucine-rich repeat and IQ domain-containing protein 4 (Lrriq4), found in Mus musculus (Mouse).